The primary structure comprises 303 residues: Elongation factor Ts (303 aa).

An involved in Mg(2+) ion dislocation from EF-Tu region spans residues 80–83; sequence TDFV.

The protein belongs to the EF-Ts family.

The protein resides in the cytoplasm. Its function is as follows. Associates with the EF-Tu.GDP complex and induces the exchange of GDP to GTP. It remains bound to the aminoacyl-tRNA.EF-Tu.GTP complex up to the GTP hydrolysis stage on the ribosome. This Clostridium perfringens (strain ATCC 13124 / DSM 756 / JCM 1290 / NCIMB 6125 / NCTC 8237 / Type A) protein is Elongation factor Ts.